The chain runs to 227 residues: MAYPFQLGLQDATSPIMEELMNFHDHTLMIVFLISTLVLYIISLMLTTKLTHTSTMDAQEVETVWTILPAVILIMIALPSLRILYMMDEINNPVLTVKTMGHQWYWSYEYTDYEDLCFDSYMIPTNDLKPGELRLLEVDNRVVLPMELPIRMLISSEDVLHSWAVPSLGLKTDAIPGRLNQATVTSNRPGLFYGQCSEICGSNHSFMPIVLEMVPLKHFENWSTSMI.

The Mitochondrial intermembrane portion of the chain corresponds to 1-14; the sequence is MAYPFQLGLQDATS. The chain crosses the membrane as a helical span at residues 15-45; sequence PIMEELMNFHDHTLMIVFLISTLVLYIISLM. At 46 to 59 the chain is on the mitochondrial matrix side; that stretch reads LTTKLTHTSTMDAQ. A helical transmembrane segment spans residues 60 to 87; that stretch reads EVETVWTILPAVILIMIALPSLRILYMM. At 88-227 the chain is on the mitochondrial intermembrane side; the sequence is DEINNPVLTV…HFENWSTSMI (140 aa). Cu cation contacts are provided by His-161, Cys-196, Glu-198, Cys-200, His-204, and Met-207. Residue Glu-198 coordinates Mg(2+).

The protein belongs to the cytochrome c oxidase subunit 2 family. As to quaternary structure, component of the cytochrome c oxidase (complex IV, CIV), a multisubunit enzyme composed of 14 subunits. The complex is composed of a catalytic core of 3 subunits MT-CO1, MT-CO2 and MT-CO3, encoded in the mitochondrial DNA, and 11 supernumerary subunits COX4I, COX5A, COX5B, COX6A, COX6B, COX6C, COX7A, COX7B, COX7C, COX8 and NDUFA4, which are encoded in the nuclear genome. The complex exists as a monomer or a dimer and forms supercomplexes (SCs) in the inner mitochondrial membrane with NADH-ubiquinone oxidoreductase (complex I, CI) and ubiquinol-cytochrome c oxidoreductase (cytochrome b-c1 complex, complex III, CIII), resulting in different assemblies (supercomplex SCI(1)III(2)IV(1) and megacomplex MCI(2)III(2)IV(2)). Found in a complex with TMEM177, COA6, COX18, COX20, SCO1 and SCO2. Interacts with TMEM177 in a COX20-dependent manner. Interacts with COX20. Interacts with COX16. Cu cation serves as cofactor.

The protein resides in the mitochondrion inner membrane. It carries out the reaction 4 Fe(II)-[cytochrome c] + O2 + 8 H(+)(in) = 4 Fe(III)-[cytochrome c] + 2 H2O + 4 H(+)(out). Its function is as follows. Component of the cytochrome c oxidase, the last enzyme in the mitochondrial electron transport chain which drives oxidative phosphorylation. The respiratory chain contains 3 multisubunit complexes succinate dehydrogenase (complex II, CII), ubiquinol-cytochrome c oxidoreductase (cytochrome b-c1 complex, complex III, CIII) and cytochrome c oxidase (complex IV, CIV), that cooperate to transfer electrons derived from NADH and succinate to molecular oxygen, creating an electrochemical gradient over the inner membrane that drives transmembrane transport and the ATP synthase. Cytochrome c oxidase is the component of the respiratory chain that catalyzes the reduction of oxygen to water. Electrons originating from reduced cytochrome c in the intermembrane space (IMS) are transferred via the dinuclear copper A center (CU(A)) of subunit 2 and heme A of subunit 1 to the active site in subunit 1, a binuclear center (BNC) formed by heme A3 and copper B (CU(B)). The BNC reduces molecular oxygen to 2 water molecules using 4 electrons from cytochrome c in the IMS and 4 protons from the mitochondrial matrix. This is Cytochrome c oxidase subunit 2 (MT-CO2) from Apodemus semotus (Taiwan field mouse).